A 145-amino-acid chain; its full sequence is uncharacterized protein (145 aa).

The next 2 membrane-spanning stretches (helical) occupy residues 20–40 (LIGPFLFAIIYWSIFIEGMFF) and 116–136 (MIMLLYAEIIIYSSFSCVLSA).

It is found in the membrane. This is an uncharacterized protein from Saccharomyces cerevisiae (strain ATCC 204508 / S288c) (Baker's yeast).